Here is a 407-residue protein sequence, read N- to C-terminus: Peptidase T (407 aa).

H82 is a binding site for Zn(2+). Residue D84 is part of the active site. D143 is a Zn(2+) binding site. Catalysis depends on E177, which acts as the Proton acceptor. Residues E178, D200, and H382 each contribute to the Zn(2+) site.

This sequence belongs to the peptidase M20B family. Zn(2+) is required as a cofactor.

It localises to the cytoplasm. The enzyme catalyses Release of the N-terminal residue from a tripeptide.. In terms of biological role, cleaves the N-terminal amino acid of tripeptides. The polypeptide is Peptidase T (Streptococcus pyogenes serotype M28 (strain MGAS6180)).